Reading from the N-terminus, the 746-residue chain is Ring assembly protein 3 (746 aa).

Its subcellular location is the cytoplasm. Essential for actinomyosin ring assembly during cytokinesis. Has a role, in conjunction with F-actin, in assembling myosin II-containing proteins, such as myo2, at the division site. The sequence is that of Ring assembly protein 3 (rng3) from Schizosaccharomyces pombe (strain 972 / ATCC 24843) (Fission yeast).